Here is a 102-residue protein sequence, read N- to C-terminus: Large ribosomal subunit protein bL21 (102 aa).

The protein belongs to the bacterial ribosomal protein bL21 family. In terms of assembly, part of the 50S ribosomal subunit. Contacts protein L20.

Functionally, this protein binds to 23S rRNA in the presence of protein L20. This is Large ribosomal subunit protein bL21 from Nitratidesulfovibrio vulgaris (strain ATCC 29579 / DSM 644 / CCUG 34227 / NCIMB 8303 / VKM B-1760 / Hildenborough) (Desulfovibrio vulgaris).